The chain runs to 258 residues: N(G),N(G)-dimethylarginine dimethylaminohydrolase (258 aa).

Residues Leu19, Asp62, 67–68, Arg87, and Arg133 each bind substrate; that span reads ED. Residue His163 is the Proton donor of the active site. Cys248 acts as the Nucleophile in catalysis.

This sequence belongs to the DDAH family.

It carries out the reaction N(omega),N(omega)-dimethyl-L-arginine + H2O = dimethylamine + L-citrulline. It catalyses the reaction N(omega)-methyl-L-arginine + H2O = L-citrulline + methylamine. Hydrolyzes N(G),N(G)-dimethyl-L-arginine (ADMA) and N(G)-monomethyl-L-arginine (MMA). The protein is N(G),N(G)-dimethylarginine dimethylaminohydrolase (ddaH) of Streptomyces coelicolor (strain ATCC BAA-471 / A3(2) / M145).